The chain runs to 421 residues: UDP-N-acetylglucosamine 1-carboxyvinyltransferase (421 aa).

22–23 contacts phosphoenolpyruvate; sequence KN. Arg93 provides a ligand contact to UDP-N-acetyl-alpha-D-glucosamine. The active-site Proton donor is the Cys117. Cys117 bears the 2-(S-cysteinyl)pyruvic acid O-phosphothioketal mark. Residues 122-126, Asp308, and Val330 contribute to the UDP-N-acetyl-alpha-D-glucosamine site; that span reads RPVDL.

This sequence belongs to the EPSP synthase family. MurA subfamily.

Its subcellular location is the cytoplasm. The enzyme catalyses phosphoenolpyruvate + UDP-N-acetyl-alpha-D-glucosamine = UDP-N-acetyl-3-O-(1-carboxyvinyl)-alpha-D-glucosamine + phosphate. It participates in cell wall biogenesis; peptidoglycan biosynthesis. Cell wall formation. Adds enolpyruvyl to UDP-N-acetylglucosamine. This chain is UDP-N-acetylglucosamine 1-carboxyvinyltransferase, found in Ectopseudomonas mendocina (strain ymp) (Pseudomonas mendocina).